Consider the following 460-residue polypeptide: Bifunctional protein GlmU (460 aa).

The interval 1–229 is pyrophosphorylase; it reads MSKLNIVVLA…VWETTGVNSK (229 aa). UDP-N-acetyl-alpha-D-glucosamine-binding positions include 9–12, K23, Q74, 79–80, 101–103, G138, E154, N169, and N227; these read LAAG, GT, and YGD. Residue D103 coordinates Mg(2+). Residue N227 coordinates Mg(2+). The segment at 230 to 250 is linker; sequence VQLAGLERIYQTAQANKLLEQ. The interval 251 to 460 is N-acetyltransferase; that stretch reads GVALADPARI…RPVKKPKPKN (210 aa). Positions 333 and 351 each coordinate UDP-N-acetyl-alpha-D-glucosamine. Residue H363 is the Proton acceptor of the active site. Residues Y366 and N377 each contribute to the UDP-N-acetyl-alpha-D-glucosamine site. Residues A380, 386-387, S405, A423, and R440 each bind acetyl-CoA; that span reads NY.

In the N-terminal section; belongs to the N-acetylglucosamine-1-phosphate uridyltransferase family. It in the C-terminal section; belongs to the transferase hexapeptide repeat family. Homotrimer. Requires Mg(2+) as cofactor.

It is found in the cytoplasm. It catalyses the reaction alpha-D-glucosamine 1-phosphate + acetyl-CoA = N-acetyl-alpha-D-glucosamine 1-phosphate + CoA + H(+). The catalysed reaction is N-acetyl-alpha-D-glucosamine 1-phosphate + UTP + H(+) = UDP-N-acetyl-alpha-D-glucosamine + diphosphate. It participates in nucleotide-sugar biosynthesis; UDP-N-acetyl-alpha-D-glucosamine biosynthesis; N-acetyl-alpha-D-glucosamine 1-phosphate from alpha-D-glucosamine 6-phosphate (route II): step 2/2. The protein operates within nucleotide-sugar biosynthesis; UDP-N-acetyl-alpha-D-glucosamine biosynthesis; UDP-N-acetyl-alpha-D-glucosamine from N-acetyl-alpha-D-glucosamine 1-phosphate: step 1/1. Its pathway is bacterial outer membrane biogenesis; LPS lipid A biosynthesis. Its function is as follows. Catalyzes the last two sequential reactions in the de novo biosynthetic pathway for UDP-N-acetylglucosamine (UDP-GlcNAc). The C-terminal domain catalyzes the transfer of acetyl group from acetyl coenzyme A to glucosamine-1-phosphate (GlcN-1-P) to produce N-acetylglucosamine-1-phosphate (GlcNAc-1-P), which is converted into UDP-GlcNAc by the transfer of uridine 5-monophosphate (from uridine 5-triphosphate), a reaction catalyzed by the N-terminal domain. This Nitrosospira multiformis (strain ATCC 25196 / NCIMB 11849 / C 71) protein is Bifunctional protein GlmU.